We begin with the raw amino-acid sequence, 359 residues long: Peptide chain release factor 1 (359 aa).

N5-methylglutamine is present on Q235. Residues 282–307 (RQRADSERSADRKSQVGSGDRSERIR) are compositionally biased toward basic and acidic residues. The segment at 282–309 (RQRADSERSADRKSQVGSGDRSERIRTY) is disordered.

This sequence belongs to the prokaryotic/mitochondrial release factor family. Methylated by PrmC. Methylation increases the termination efficiency of RF1.

It localises to the cytoplasm. Peptide chain release factor 1 directs the termination of translation in response to the peptide chain termination codons UAG and UAA. This chain is Peptide chain release factor 1, found in Allorhizobium ampelinum (strain ATCC BAA-846 / DSM 112012 / S4) (Agrobacterium vitis (strain S4)).